Here is a 197-residue protein sequence, read N- to C-terminus: Isopentenyl-diphosphate Delta-isomerase (197 aa).

Mn(2+) is bound by residues His41 and His48. Residues Gln46–Ala183 enclose the Nudix hydrolase domain. Cys83 is an active-site residue. Residue Cys83 participates in Mg(2+) binding. His85 lines the Mn(2+) pocket. Residue Glu103 participates in Mg(2+) binding. Residues Glu130 and Glu132 each coordinate Mn(2+). Glu132 is a catalytic residue.

This sequence belongs to the IPP isomerase type 1 family. The cofactor is Mg(2+). It depends on Mn(2+) as a cofactor.

The protein localises to the cytoplasm. The enzyme catalyses isopentenyl diphosphate = dimethylallyl diphosphate. It functions in the pathway isoprenoid biosynthesis; dimethylallyl diphosphate biosynthesis; dimethylallyl diphosphate from isopentenyl diphosphate: step 1/1. Functionally, catalyzes the 1,3-allylic rearrangement of the homoallylic substrate isopentenyl (IPP) to its highly electrophilic allylic isomer, dimethylallyl diphosphate (DMAPP). In Streptomyces avermitilis (strain ATCC 31267 / DSM 46492 / JCM 5070 / NBRC 14893 / NCIMB 12804 / NRRL 8165 / MA-4680), this protein is Isopentenyl-diphosphate Delta-isomerase.